The chain runs to 811 residues: Zinc finger CCCH domain-containing protein 11A (811 aa).

C3H1-type zinc fingers lie at residues 2–30, 32–58, and 61–87; these read PNQGEDCYFFFFYSTCTKGDSCPFRHCEA, LGNETVCTLWQEGRCFRQVCRFRHMEI, and KRSEIPCYWENQPTGCQKLNCAFHHNR. Ser109 carries the post-translational modification Phosphoserine. Residues Lys115 and Lys125 each participate in a glycyl lysine isopeptide (Lys-Gly) (interchain with G-Cter in SUMO2) cross-link. A Phosphoserine modification is found at Ser133. Disordered regions lie at residues 140 to 195, 224 to 258, 286 to 352, and 368 to 434; these read MKVE…GLRV, KKMKEKSKKQGEGSSGVSSLLLHPEPVPGPEKENV, GKRK…EKVN, and ERAS…TCIK. A Glycyl lysine isopeptide (Lys-Gly) (interchain with G-Cter in SUMO2) cross-link involves residue Lys141. Ser150 and Ser172 each carry phosphoserine. The span at 161 to 176 shows a compositional bias: acidic residues; that stretch reads ADDDEDDDDQFSEEGD. Ser291 is modified (phosphoserine). 2 stretches are compositionally biased toward basic and acidic residues: residues 310–323 and 368–391; these read KKVEAPEANIDKTP and ERASQKRGELQTKLKTEGPSKTDD. A Phosphothreonine modification is found at Thr322. A coiled-coil region spans residues 363 to 424; the sequence is EEILLERASQ…KHRQQEAERQ (62 aa). The residue at position 371 (Ser371) is a Phosphoserine. The span at 392–403 shows a compositional bias: polar residues; that stretch reads STSGARSSSTIR. Positions 418 to 434 are enriched in basic and acidic residues; the sequence is QQEAERQKSKKDTTCIK. Lys479 participates in a covalent cross-link: Glycyl lysine isopeptide (Lys-Gly) (interchain with G-Cter in SUMO2). The segment at 483-550 is disordered; that stretch reads ALRVQQSSES…KEASGETTGV (68 aa). Over residues 487–499 the composition is skewed to low complexity; that stretch reads QQSSESSTSSPSQ. A Glycyl lysine isopeptide (Lys-Gly) (interchain with G-Cter in SUMO2) cross-link involves residue Lys620. The disordered stretch occupies residues 716-769; that stretch reads TVPEAENPRDSLVLPPTQSSSDSSPPEVSGPSSSQMSMKTRRLSSASTGKPQLS. Positions 730 to 749 are enriched in low complexity; it reads PPTQSSSDSSPPEVSGPSSS. Residues 750-766 are compositionally biased toward polar residues; it reads QMSMKTRRLSSASTGKP.

As to quaternary structure, interacts with TREX complex components THOC2, DDX39 and POLDIP3; the interactions are ATP-dependent. Interacts with PABPN1; this interaction retains ZC3H11A in nuclear speckles. Interacts with KPNA3.

The protein resides in the nucleus speckle. In terms of biological role, through its association with TREX complex components, may participate in the export and post-transcriptional coordination of selected mRNA transcripts, including those required to maintain the metabolic processes in embryonic cells. Binds RNA. The polypeptide is Zinc finger CCCH domain-containing protein 11A (ZC3H11A) (Pongo abelii (Sumatran orangutan)).